The primary structure comprises 364 residues: Selection and upkeep of intraepithelial T-cells protein 11 (364 aa).

An N-terminal signal peptide occupies residues 1 to 28 (MEPSASCLPGFFMVCILLKITVLTQVMS). The region spanning 29 to 118 (LDIQINTQIP…TNQEKRRSII (90 aa)) is the Ig-like V-type domain. Residues 29–138 (LDIQINTQIP…MSLMSNNLLY (110 aa)) lie on the Extracellular side of the membrane. Cys-48 and Cys-102 are oxidised to a cystine. A helical transmembrane segment spans residues 139–159 (LGIYLIFILFLNFLKGILFCL). Residues 160 to 186 (TKRLVHFRKRMIKIKKVWSNKTRACCP) lie on the Cytoplasmic side of the membrane. The helical transmembrane segment at 187-207 (LIWEFLEIVLFIAFLPLYLMF) threads the bilayer. The Extracellular segment spans residues 208–230 (RIRVFTLDEAHILYNNWLWKVCK). The chain crosses the membrane as a helical span at residues 231–251 (TLIAMMILFTVLILFLLWTLN). Topologically, residues 252 to 364 (RYGKMPCLSS…LYSKLGNLTH (113 aa)) are cytoplasmic.

Belongs to the SKINT family. Expressed in skin and thymus.

It localises to the membrane. Its function is as follows. May act by engaging a cell surface molecule on immature T-cells in the embryonic thymus. This chain is Selection and upkeep of intraepithelial T-cells protein 11 (Skint11), found in Mus musculus (Mouse).